The primary structure comprises 373 residues: Homoserine O-acetyltransferase (373 aa).

The region spanning 52–356 (NVVMVLHALT…VYGHDGFLVE (305 aa)) is the AB hydrolase-1 domain. Catalysis depends on S157, which acts as the Nucleophile. A substrate-binding site is contributed by R227. Catalysis depends on residues D320 and H350. Residue D351 coordinates substrate.

Belongs to the AB hydrolase superfamily. MetX family. As to quaternary structure, homodimer.

The protein resides in the cytoplasm. The catalysed reaction is L-homoserine + acetyl-CoA = O-acetyl-L-homoserine + CoA. Its pathway is amino-acid biosynthesis; L-methionine biosynthesis via de novo pathway; O-acetyl-L-homoserine from L-homoserine: step 1/1. Its function is as follows. Transfers an acetyl group from acetyl-CoA to L-homoserine, forming acetyl-L-homoserine. In Mycobacterium sp. (strain KMS), this protein is Homoserine O-acetyltransferase.